The chain runs to 70 residues: Large ribosomal subunit protein eL38 (70 aa).

Belongs to the eukaryotic ribosomal protein eL38 family.

This chain is Large ribosomal subunit protein eL38 (RPL38), found in Branchiostoma belcheri (Amphioxus).